A 468-amino-acid chain; its full sequence is Glutamate--tRNA ligase (468 aa).

The 'HIGH' region motif lies at 8 to 18; the sequence is PSPTGFLHVGG. The Zn(2+) site is built by Cys-97, Cys-99, Cys-124, and Asp-126. Residues 236 to 240 carry the 'KMSKS' region motif; it reads KLSKR. Lys-239 provides a ligand contact to ATP.

The protein belongs to the class-I aminoacyl-tRNA synthetase family. Glutamate--tRNA ligase type 1 subfamily. As to quaternary structure, monomer. Zn(2+) is required as a cofactor.

Its subcellular location is the cytoplasm. It carries out the reaction tRNA(Glu) + L-glutamate + ATP = L-glutamyl-tRNA(Glu) + AMP + diphosphate. Functionally, catalyzes the attachment of glutamate to tRNA(Glu) in a two-step reaction: glutamate is first activated by ATP to form Glu-AMP and then transferred to the acceptor end of tRNA(Glu). The chain is Glutamate--tRNA ligase from Francisella tularensis subsp. holarctica (strain FTNF002-00 / FTA).